An 80-amino-acid chain; its full sequence is Regulatory protein HrpD6 (80 aa).

Functionally, involved in the regulation of several genes of the hrp-hrc-hpa cluster, which encodes a type III secretion system (T3SS). Upregulates the expression of hpa2, hpa1 and hpaB and partially controls the expression of hrcC and hrcT. Controls the secretion of the T3SS TAL effector AvrXa27. Also regulates the expression of several HrpX-regulated protein (Xrp) genes. Has no influence on hrpG or hrpX expression. The sequence is that of Regulatory protein HrpD6 from Xanthomonas oryzae pv. oryzicola.